A 372-amino-acid chain; its full sequence is tRNA-specific 2-thiouridylase MnmA (372 aa).

Residues 9 to 16 (GMSGGVDS) and Met-35 each bind ATP. The interval 95–97 (NPD) is interaction with target base in tRNA. Cys-100 serves as the catalytic Nucleophile. Residues Cys-100 and Cys-201 are joined by a disulfide bond. Gly-124 is an ATP binding site. Residues 151–153 (KDQ) form an interaction with tRNA region. Catalysis depends on Cys-201, which acts as the Cysteine persulfide intermediate. The tract at residues 317 to 318 (RY) is interaction with tRNA.

It belongs to the MnmA/TRMU family.

The protein localises to the cytoplasm. The enzyme catalyses S-sulfanyl-L-cysteinyl-[protein] + uridine(34) in tRNA + AH2 + ATP = 2-thiouridine(34) in tRNA + L-cysteinyl-[protein] + A + AMP + diphosphate + H(+). In terms of biological role, catalyzes the 2-thiolation of uridine at the wobble position (U34) of tRNA, leading to the formation of s(2)U34. The chain is tRNA-specific 2-thiouridylase MnmA from Herminiimonas arsenicoxydans.